The sequence spans 61 residues: Probable tautomerase spyM18_1099 (61 aa).

Pro2 (proton acceptor; via imino nitrogen) is an active-site residue.

Belongs to the 4-oxalocrotonate tautomerase family.

In Streptococcus pyogenes serotype M18 (strain MGAS8232), this protein is Probable tautomerase spyM18_1099.